Reading from the N-terminus, the 117-residue chain is Large ribosomal subunit protein bL20c (117 aa).

This sequence belongs to the bacterial ribosomal protein bL20 family.

The protein resides in the plastid. The protein localises to the chloroplast. In terms of biological role, binds directly to 23S ribosomal RNA and is necessary for the in vitro assembly process of the 50S ribosomal subunit. It is not involved in the protein synthesizing functions of that subunit. The chain is Large ribosomal subunit protein bL20c from Phalaenopsis aphrodite subsp. formosana (Moth orchid).